An 83-amino-acid polypeptide reads, in one-letter code: Apolipoprotein C-I (83 aa).

The N-terminal stretch at 1–26 (MRLFLSLPVLVVVLSIVLEGPAPAQG) is a signal peptide.

It belongs to the apolipoprotein C1 family. Synthesized mainly in liver and to a minor degree in intestine. Also found in the lung and spleen.

The protein resides in the secreted. Its function is as follows. Inhibitor of lipoprotein binding to the low density lipoprotein (LDL) receptor, LDL receptor-related protein, and very low density lipoprotein (VLDL) receptor. Associates with high density lipoproteins (HDL) and the triacylglycerol-rich lipoproteins in the plasma and makes up about 10% of the protein of the VLDL and 2% of that of HDL. Appears to interfere directly with fatty acid uptake and is also the major plasma inhibitor of cholesteryl ester transfer protein (CETP). Binds free fatty acids and reduces their intracellular esterification. Modulates the interaction of APOE with beta-migrating VLDL and inhibits binding of beta-VLDL to the LDL receptor-related protein. The sequence is that of Apolipoprotein C-I (APOC1) from Homo sapiens (Human).